We begin with the raw amino-acid sequence, 303 residues long: MTVTDTFKLFILRHGQSELNSENIFCGWIDAQLTEKGKSQARHSAKLIKQFCDSNNISLPQIGYTSRLIRTQQTMDVILEELGLKHTNYVITTNTNIKEELQDTRFEGSMPVLQTWRLNERHYGAWQGQRKPDILKEYGKEKYMYIRRDYNGKPPKVNLNLEMVQEENDQGSSTGYDFKEPNRHLKYGPEEKANERLPESESLCEVVVRLKPFLNNVVLSTANKISQESCVIVGHGSSVRSLLKVLEGISDEDIKDVDIPNGIPLVIELDRDNYSFVRKFYLDPESAKVNAQMVRDEGFEKNP.

Residues 13–20 (RHGQSELN), 26–27 (CG), R70, 120–123 (ERHY), K131, and 147–148 (RR) contribute to the substrate site. The Tele-phosphohistidine intermediate role is filled by H14. Catalysis depends on E120, which acts as the Proton donor/acceptor. The disordered stretch occupies residues 168–198 (NDQGSSTGYDFKEPNRHLKYGPEEKANERLP). Positions 177–198 (DFKEPNRHLKYGPEEKANERLP) are enriched in basic and acidic residues. 236 to 237 (GS) is a substrate binding site.

It belongs to the phosphoglycerate mutase family. BPG-dependent PGAM subfamily.

It carries out the reaction (2R)-2-phosphoglycerate = (2R)-3-phosphoglycerate. Its pathway is carbohydrate degradation; glycolysis; pyruvate from D-glyceraldehyde 3-phosphate: step 3/5. In terms of biological role, could be non-functional. The protein is Phosphoglycerate mutase 3 (GPM3) of Saccharomyces cerevisiae (strain ATCC 204508 / S288c) (Baker's yeast).